The chain runs to 83 residues: Small ribosomal subunit protein bS16 (83 aa).

Belongs to the bacterial ribosomal protein bS16 family.

This chain is Small ribosomal subunit protein bS16, found in Pseudomonas fluorescens (strain SBW25).